Reading from the N-terminus, the 237-residue chain is Purine nucleoside phosphorylase DeoD-type (237 aa).

His4 provides a ligand contact to a purine D-ribonucleoside. Phosphate-binding positions include Gly20, Arg24, Arg43, and 87–90 (RVGT). Residues 179–181 (EME) and 203–204 (SD) each bind a purine D-ribonucleoside. The active-site Proton donor is the Asp204.

This sequence belongs to the PNP/UDP phosphorylase family. In terms of assembly, homohexamer; trimer of homodimers.

The catalysed reaction is a purine D-ribonucleoside + phosphate = a purine nucleobase + alpha-D-ribose 1-phosphate. It catalyses the reaction a purine 2'-deoxy-D-ribonucleoside + phosphate = a purine nucleobase + 2-deoxy-alpha-D-ribose 1-phosphate. In terms of biological role, catalyzes the reversible phosphorolytic breakdown of the N-glycosidic bond in the beta-(deoxy)ribonucleoside molecules, with the formation of the corresponding free purine bases and pentose-1-phosphate. The polypeptide is Purine nucleoside phosphorylase DeoD-type (Clostridium beijerinckii (strain ATCC 51743 / NCIMB 8052) (Clostridium acetobutylicum)).